A 319-amino-acid polypeptide reads, in one-letter code: Lipopolysaccharide heptosyltransferase 1 (319 aa).

9 residues coordinate ADP-L-glycero-beta-D-manno-heptose: threonine 187, threonine 188, lysine 192, glutamate 222, methionine 242, aspartate 261, threonine 262, glycine 263, and histidine 266.

It belongs to the glycosyltransferase 9 family.

It is found in the cell inner membrane. The catalysed reaction is an alpha-Kdo-(2-&gt;4)-alpha-Kdo-(2-&gt;6)-lipid A + ADP-L-glycero-beta-D-manno-heptose = an L-alpha-D-Hep-(1-&gt;5)-[alpha-Kdo-(2-&gt;4)]-alpha-Kdo-(2-&gt;6)-lipid A + ADP + H(+). It carries out the reaction alpha-Kdo-(2-&gt;4)-alpha-Kdo-(2-&gt;6)-lipid A (E. coli) + ADP-L-glycero-beta-D-manno-heptose = L-alpha-D-Hep-(1-&gt;5)-[alpha-Kdo-(2-&gt;4)]-alpha-Kdo-(2-&gt;6)-lipid A (E. coli) + ADP + H(+). It functions in the pathway bacterial outer membrane biogenesis; LPS core biosynthesis. Glycosyltransferase involved in the biosynthesis of the core oligosaccharide region of lipopolysaccharide (LPS). Catalyzes the addition of the first heptose unit to one 3-deoxy-D-manno-octulosonic acid (Kdo) residue of the Kdo2-lipid A module. The analog ADP-mannose can serve as an alternative donor in place of ADP-L-glycero-D-manno-heptose for the glycosylation of Kdo2-lipid A. Displays no activity with ADP-glucose, GDP-mannose, UDP-glucose or UDP-galactose. In Escherichia coli (strain K12), this protein is Lipopolysaccharide heptosyltransferase 1.